The chain runs to 461 residues: Putative dipeptidase CPSG_01350 (461 aa).

Residues 1–10 (MSARDNEKGS) show a composition bias toward basic and acidic residues. The interval 1–31 (MSARDNEKGSARSQPSHAAASEIENVPRPSR) is disordered. The helical transmembrane segment at 35 to 52 (WTGTMIKVFIICACAGIV) threads the bilayer. Zn(2+) is bound by residues His90, Asp92, and Glu203. Residues Cys142 and Cys232 are joined by a disulfide bond. His230 is a substrate binding site. Zn(2+) contacts are provided by His274 and His295. 2 residues coordinate substrate: Arg306 and Asp366. A glycan (N-linked (GlcNAc...) asparagine) is linked at Asn379.

The protein belongs to the metallo-dependent hydrolases superfamily. Peptidase M19 family. The cofactor is Zn(2+).

The protein localises to the membrane. It catalyses the reaction an L-aminoacyl-L-amino acid + H2O = 2 an L-alpha-amino acid. Functionally, hydrolyzes a wide range of dipeptides. The sequence is that of Putative dipeptidase CPSG_01350 from Coccidioides posadasii (strain RMSCC 757 / Silveira) (Valley fever fungus).